A 180-amino-acid chain; its full sequence is Large ribosomal subunit protein uL5 (180 aa).

It belongs to the universal ribosomal protein uL5 family. Part of the 50S ribosomal subunit; part of the 5S rRNA/L5/L18/L25 subcomplex. Contacts the 5S rRNA and the P site tRNA. Forms a bridge to the 30S subunit in the 70S ribosome.

Functionally, this is one of the proteins that bind and probably mediate the attachment of the 5S RNA into the large ribosomal subunit, where it forms part of the central protuberance. In the 70S ribosome it contacts protein S13 of the 30S subunit (bridge B1b), connecting the 2 subunits; this bridge is implicated in subunit movement. Contacts the P site tRNA; the 5S rRNA and some of its associated proteins might help stabilize positioning of ribosome-bound tRNAs. In Stenotrophomonas maltophilia (strain R551-3), this protein is Large ribosomal subunit protein uL5.